We begin with the raw amino-acid sequence, 165 residues long: uncharacterized protein (165 aa).

Positions 49–165 (QLKPQGPKRP…VAQQREIAQK (117 aa)) are disordered. Residues 94 to 106 (MNNNNNYKISYTS) are compositionally biased toward polar residues. Positions 120 to 135 (TLQRTTPQAQPTPQQP) are enriched in low complexity. Residues 139–157 (SRSSGGITGAVNNRPQMVA) are compositionally biased toward polar residues.

This is an uncharacterized protein from Caenorhabditis elegans.